Reading from the N-terminus, the 440-residue chain is Argininosuccinate lyase (440 aa).

It belongs to the lyase 1 family. Argininosuccinate lyase subfamily.

It localises to the cytoplasm. It carries out the reaction 2-(N(omega)-L-arginino)succinate = fumarate + L-arginine. The protein operates within amino-acid biosynthesis; L-arginine biosynthesis; L-arginine from L-ornithine and carbamoyl phosphate: step 3/3. This chain is Argininosuccinate lyase, found in Clostridium botulinum (strain 657 / Type Ba4).